The chain runs to 445 residues: Ribosomal protein uS12 methylthiotransferase RimO (445 aa).

Residues 6–121 (KKVAVVTLGC…ILETLEEAEK (116 aa)) enclose the MTTase N-terminal domain. The [4Fe-4S] cluster site is built by Cys-15, Cys-50, Cys-84, Cys-159, Cys-163, and Cys-166. The 231-residue stretch at 145–375 (LSPKQYAYVK…MELQHDIAYE (231 aa)) folds into the Radical SAM core domain. A TRAM domain is found at 378–445 (QRWVGQTLKV…SYDLMGEVVQ (68 aa)).

The protein belongs to the methylthiotransferase family. RimO subfamily. [4Fe-4S] cluster is required as a cofactor.

It is found in the cytoplasm. It catalyses the reaction L-aspartate(89)-[ribosomal protein uS12]-hydrogen + (sulfur carrier)-SH + AH2 + 2 S-adenosyl-L-methionine = 3-methylsulfanyl-L-aspartate(89)-[ribosomal protein uS12]-hydrogen + (sulfur carrier)-H + 5'-deoxyadenosine + L-methionine + A + S-adenosyl-L-homocysteine + 2 H(+). Its function is as follows. Catalyzes the methylthiolation of an aspartic acid residue of ribosomal protein uS12. In Desulfitobacterium hafniense (strain Y51), this protein is Ribosomal protein uS12 methylthiotransferase RimO.